The chain runs to 217 residues: Phosphatidylcholine synthase (217 aa).

The helical transmembrane segment at 1–8 threads the bilayer; the sequence is ACIGVFSL. Residues 9–16 are Periplasmic-facing; it reads VKIYQHEY. A helical membrane pass occupies residues 17 to 37; it reads IFALWLMFITVVIDAVDGTLA. The Cytoplasmic segment spans residues 38–50; that stretch reads RLVNIKKILPKID. A helical membrane pass occupies residues 51 to 71; the sequence is GALLDNIVDYLNYVITPCFFL. Over 72–77 the chain is Periplasmic; the sequence is LVKPGM. A helical membrane pass occupies residues 78–98; sequence LPPEYSVFLIAAVSITSAYQF. Residues 99–107 lie on the Cytoplasmic side of the membrane; it reads CQCDAKTPD. Residues 108–128 traverse the membrane as a helical segment; the sequence is HFFKGFPCYWNITILYMFIFN. A topological domain (periplasmic) is located at residue threonine 129. The helical transmembrane segment at 130–149 threads the bilayer; that stretch reads SAATNAIILIILSILIFVPV. The Cytoplasmic segment spans residues 150-164; the sequence is KYVYPSRLDYLTESR. Residues 165 to 185 traverse the membrane as a helical segment; that stretch reads ILKILMHICSIIYAVSSICIL. At 186-191 the chain is on the periplasmic side; sequence ISYPNT. A helical transmembrane segment spans residues 192–212; the sequence is NIICLSLSVAYVGMYLFLSFY. Topologically, residues 213–217 are cytoplasmic; that stretch reads RTYYP.

This sequence belongs to the CDP-alcohol phosphatidyltransferase class-I family. Requires Mn(2+) as cofactor.

It is found in the cell inner membrane. The enzyme catalyses a CDP-1,2-diacyl-sn-glycerol + choline = a 1,2-diacyl-sn-glycero-3-phosphocholine + CMP + H(+). In terms of biological role, condenses choline with CDP-diglyceride to produce phosphatidylcholine and CMP. The polypeptide is Phosphatidylcholine synthase (Legionella bozemanae (Fluoribacter bozemanae)).